The primary structure comprises 197 residues: Casparian strip membrane protein 5 (197 aa).

Topologically, residues 1-34 (MSTTIDMPGSSKAAKAGKPVLVTTPSRPGGWKKG) are cytoplasmic. The helical transmembrane segment at 35–55 (VAIMDFILRLGAIAAALGAAA) threads the bilayer. The Extracellular segment spans residues 56–84 (TMGLSDQTLPFFTQFFQFEASYDSFTTFQ). Residues 85–105 (FFVITMALVAGYLVLSLPLSI) form a helical membrane-spanning segment. At 106 to 117 (VAVVRPHAAGPR) the chain is on the cytoplasmic side. Residues 118 to 138 (LFLIILDTVFLTLATASGASA) form a helical membrane-spanning segment. The Extracellular segment spans residues 139–171 (ASIVYLAHNGNQDTNWIAICNQFGDFCAQTSGA). The helical transmembrane segment at 172–192 (VVSSLVAVLVFVLLIVMSALV) threads the bilayer. The Cytoplasmic portion of the chain corresponds to 193–197 (LGKKH).

This sequence belongs to the Casparian strip membrane proteins (CASP) family. In terms of assembly, homodimer and heterodimers.

It is found in the cell membrane. In terms of biological role, regulates membrane-cell wall junctions and localized cell wall deposition. Required for establishment of the Casparian strip membrane domain (CSD) and the subsequent formation of Casparian strips, a cell wall modification of the root endodermis that determines an apoplastic barrier between the intraorganismal apoplasm and the extraorganismal apoplasm and prevents lateral diffusion. In Lotus japonicus (Lotus corniculatus var. japonicus), this protein is Casparian strip membrane protein 5.